A 204-amino-acid chain; its full sequence is Octanoyltransferase (204 aa).

The BPL/LPL catalytic domain occupies 27–202 (QGGEEALLLL…RFQPLLNLHL (176 aa)). Residues 65 to 72 (RGGDVTYH), 132 to 134 (SIG), and 145 to 147 (GFA) each bind substrate. Residue Cys-163 is the Acyl-thioester intermediate of the active site.

It belongs to the LipB family.

The protein localises to the cytoplasm. The catalysed reaction is octanoyl-[ACP] + L-lysyl-[protein] = N(6)-octanoyl-L-lysyl-[protein] + holo-[ACP] + H(+). The protein operates within protein modification; protein lipoylation via endogenous pathway; protein N(6)-(lipoyl)lysine from octanoyl-[acyl-carrier-protein]: step 1/2. Catalyzes the transfer of endogenously produced octanoic acid from octanoyl-acyl-carrier-protein onto the lipoyl domains of lipoate-dependent enzymes. Lipoyl-ACP can also act as a substrate although octanoyl-ACP is likely to be the physiological substrate. This chain is Octanoyltransferase, found in Citrifermentans bemidjiense (strain ATCC BAA-1014 / DSM 16622 / JCM 12645 / Bem) (Geobacter bemidjiensis).